The chain runs to 200 residues: Small ribosomal subunit protein uS5 (200 aa).

Residues 1-12 show a composition bias toward polar residues; sequence MGRPRTSQTRGQ. Residues 1-49 form a disordered region; that stretch reads MGRPRTSQTRGQGPSGATGGNPRGGGSTTRERDARGARPGERDGGSEIQ. The segment covering 13–27 has biased composition (gly residues); it reads GPSGATGGNPRGGGS. A compositionally biased stretch (basic and acidic residues) spans 29–49; sequence TRERDARGARPGERDGGSEIQ. The S5 DRBM domain occupies 48-111; the sequence is IQDRVVQIRR…EKARHAMFDV (64 aa).

Belongs to the universal ribosomal protein uS5 family. As to quaternary structure, part of the 30S ribosomal subunit. Contacts proteins S4 and S8.

With S4 and S12 plays an important role in translational accuracy. In terms of biological role, located at the back of the 30S subunit body where it stabilizes the conformation of the head with respect to the body. This chain is Small ribosomal subunit protein uS5, found in Rubrobacter xylanophilus (strain DSM 9941 / JCM 11954 / NBRC 16129 / PRD-1).